Consider the following 157-residue polypeptide: Lipoprotein signal peptidase (157 aa).

A run of 4 helical transmembrane segments spans residues 10-30 (LVFMGGFFLIFGVDQAIKYAI), 38-58 (SLMVDIVLVFNKGVAFSLLSF), 59-79 (LEGGLKYLQILLILGLFIFLI), and 84-104 (LFKTHAIEFGMVFGAGVSNVL). Residues Asp114 and Asp131 contribute to the active site. The helical transmembrane segment at 122–142 (FDFAIFNFADVMIDVGVGVLL) threads the bilayer.

It belongs to the peptidase A8 family.

The protein localises to the cell inner membrane. It carries out the reaction Release of signal peptides from bacterial membrane prolipoproteins. Hydrolyzes -Xaa-Yaa-Zaa-|-(S,diacylglyceryl)Cys-, in which Xaa is hydrophobic (preferably Leu), and Yaa (Ala or Ser) and Zaa (Gly or Ala) have small, neutral side chains.. Its pathway is protein modification; lipoprotein biosynthesis (signal peptide cleavage). This protein specifically catalyzes the removal of signal peptides from prolipoproteins. This chain is Lipoprotein signal peptidase, found in Helicobacter pylori (strain HPAG1).